A 1347-amino-acid chain; its full sequence is Protein dispatched homolog 3 (1347 aa).

Residues 1–67 lie on the Cytoplasmic side of the membrane; sequence MDSEDDPLLQ…LGWAFTNPCC (67 aa). A helical membrane pass occupies residues 68–88; it reads AGLVLFLGCSIPMVLSAFMFL. The Lumenal portion of the chain corresponds to 89–417; sequence YYPPLDIDIS…YEVRRTFNND (329 aa). Residues 156–207 are disordered; that stretch reads GNHSRPASRAPRSAPRDTVATQTSAANSSERRRREAPSPEGQVTNQSRARRG. Asparagine 157 carries N-linked (GlcNAc...) asparagine glycosylation. Positions 159-168 are enriched in low complexity; sequence SRPASRAPRS. The 159-residue stretch at 412–570 folds into the SSD domain; the sequence is RTFNNDMLLA…LFTMPAALGL (159 aa). A helical membrane pass occupies residues 418 to 438; sequence MLLAFISSSCIAALVYILTSC. A topological domain (cytoplasmic) is located at residue serine 439. The helical transmembrane segment at 440–460 threads the bilayer; it reads VFLSFFGIASIGLSCLVALFL. Residues 461 to 463 are Lumenal-facing; sequence YHV. The chain crosses the membrane as a helical span at residues 464–484; the sequence is VFGIQYLGILNGVAAFVIVGI. Residues 485–528 lie on the Cytoplasmic side of the membrane; the sequence is GVDDVFVFINTYRQATHLEDPQLRMIHTIQTAGKATFFTSLTTA. A helical membrane pass occupies residues 529-549; sequence AAYAANVFSQIPAVHDFGLFM. A topological domain (lumenal) is located at residue serine 550. A helical transmembrane segment spans residues 551–571; the sequence is LIVTCCWLAVLFTMPAALGLW. At 572-684 the chain is on the cytoplasmic side; it reads SLYMAPLESS…WVLWAAVKSR (113 aa). The chain crosses the membrane as a helical span at residues 685 to 705; sequence WVIVGLFASILILSLVFASRL. The Lumenal portion of the chain corresponds to 706–1137; sequence RPASRAPLLF…IFMEIIGVQS (432 aa). Asparagine 976 carries N-linked (GlcNAc...) asparagine glycosylation. The chain crosses the membrane as a helical span at residues 1138–1158; it reads ALYGLVLSLLICVAAVAVFTT. Residue histidine 1159 is a topological domain, cytoplasmic. Residues 1160-1180 form a helical membrane-spanning segment; that stretch reads VLLLLPVLLSILGIVCLVVTI. Over 1181 to 1246 the chain is Lumenal; that stretch reads MYWSGWEMGA…TLEAVRHVGV (66 aa). Residues 1247–1267 form a helical membrane-spanning segment; that stretch reads AIVSSALTTVIATVPLFFCII. The Cytoplasmic portion of the chain corresponds to 1268-1281; it reads APFAKFGKIVALNT. The chain crosses the membrane as a helical span at residues 1282–1302; the sequence is GVSILYTLTVSTALLGIMAPG. Residues 1303-1310 lie on the Lumenal side of the membrane; the sequence is SFTRTRTS. A helical transmembrane segment spans residues 1311–1331; the sequence is FLKALGAVLLAGALGLGACLV. Over 1332–1347 the chain is Cytoplasmic; the sequence is LLRSGYKIPLPSGATL.

Belongs to the patched family. In terms of tissue distribution, expressed in brain, retina, testis and thymus.

The protein resides in the endoplasmic reticulum membrane. It is found in the nucleus membrane. It localises to the cytoplasmic vesicle membrane. Plays a role in neuronal proliferation and differentiation. Plays a role in the accumulation of cellular cholesterol. Involved in intracellular lipid droplet formation. May contribute to cholesterol homeostasis in neuronal cells. This Mus musculus (Mouse) protein is Protein dispatched homolog 3.